The chain runs to 901 residues: Protein translocase subunit SecA (901 aa).

ATP contacts are provided by residues Q87, 105–109 (GEGKT), and D512. Zn(2+) contacts are provided by C885, C887, C896, and H897.

This sequence belongs to the SecA family. As to quaternary structure, monomer and homodimer. Part of the essential Sec protein translocation apparatus which comprises SecA, SecYEG and auxiliary proteins SecDF-YajC and YidC. It depends on Zn(2+) as a cofactor.

It is found in the cell inner membrane. The protein localises to the cytoplasm. It catalyses the reaction ATP + H2O + cellular proteinSide 1 = ADP + phosphate + cellular proteinSide 2.. In terms of biological role, part of the Sec protein translocase complex. Interacts with the SecYEG preprotein conducting channel. Has a central role in coupling the hydrolysis of ATP to the transfer of proteins into and across the cell membrane, serving both as a receptor for the preprotein-SecB complex and as an ATP-driven molecular motor driving the stepwise translocation of polypeptide chains across the membrane. The protein is Protein translocase subunit SecA of Salmonella enteritidis PT4 (strain P125109).